Here is a 271-residue protein sequence, read N- to C-terminus: Hydroxyethylthiazole kinase (271 aa).

Position 45 (M45) interacts with substrate. ATP is bound by residues R121 and T168. G195 provides a ligand contact to substrate.

The protein belongs to the Thz kinase family. Requires Mg(2+) as cofactor.

The enzyme catalyses 5-(2-hydroxyethyl)-4-methylthiazole + ATP = 4-methyl-5-(2-phosphooxyethyl)-thiazole + ADP + H(+). It functions in the pathway cofactor biosynthesis; thiamine diphosphate biosynthesis; 4-methyl-5-(2-phosphoethyl)-thiazole from 5-(2-hydroxyethyl)-4-methylthiazole: step 1/1. Its function is as follows. Catalyzes the phosphorylation of the hydroxyl group of 4-methyl-5-beta-hydroxyethylthiazole (THZ). The chain is Hydroxyethylthiazole kinase from Bacillus pumilus (strain SAFR-032).